Here is a 282-residue protein sequence, read N- to C-terminus: MVRKMKLPFLNKNTSSSSFSSNSSSSSSSWPWPSSHQQNLKTISSKASFIVNKPKDVYEPEPPPRSFSSSPSSSSYSSFSSTSHAIENPPEIESIENVIKGLKSSKRLIFERRGTSNSILEEATKRDDHEEEEDGLMLLSLESNDPYTDFKNSMEKMVEVHVLHHDWISLEKLLFWFLKVNVKASHRYIFAAFVDLVLNLAVGPSKDVAGEPNSDVVVEDSLSSSWPVSLYSSSDENSSTSVRFLPETSIGEKGRDVCCLSSLFELEEKIKDNIDPNDYVSS.

Residues 1 to 85 (MVRKMKLPFL…YSSFSSTSHA (85 aa)) form a disordered region. Over residues 15-35 (SSSSFSSNSSSSSSSWPWPSS) the composition is skewed to low complexity. The span at 36-47 (HQQNLKTISSKA) shows a compositional bias: polar residues. The span at 66 to 85 (SFSSSPSSSSYSSFSSTSHA) shows a compositional bias: low complexity. In terms of domain architecture, OVATE spans 139 to 199 (LSLESNDPYT…FAAFVDLVLN (61 aa)).

Expressed in roots and shoots.

It localises to the nucleus. Functionally, transcriptional repressor that regulates multiple aspects of plant growth and development through the regulation of BEL1-LIKE (BLH) and KNOX TALE (KNAT) homeodomain transcription factors. In Arabidopsis thaliana (Mouse-ear cress), this protein is Transcription repressor OFP18 (OFP18).